We begin with the raw amino-acid sequence, 210 residues long: Urease accessory protein UreG (210 aa).

Gly14–Thr21 lines the GTP pocket.

The protein belongs to the SIMIBI class G3E GTPase family. UreG subfamily. Homodimer. UreD, UreF and UreG form a complex that acts as a GTP-hydrolysis-dependent molecular chaperone, activating the urease apoprotein by helping to assemble the nickel containing metallocenter of UreC. The UreE protein probably delivers the nickel.

The protein localises to the cytoplasm. Facilitates the functional incorporation of the urease nickel metallocenter. This process requires GTP hydrolysis, probably effectuated by UreG. This is Urease accessory protein UreG from Rhodopseudomonas palustris (strain BisB5).